The primary structure comprises 405 residues: Glucose-1-phosphate adenylyltransferase (405 aa).

Residues tyrosine 96, glycine 161, 176–177 (EK), and serine 194 each bind alpha-D-glucose 1-phosphate.

This sequence belongs to the bacterial/plant glucose-1-phosphate adenylyltransferase family. Homotetramer.

It catalyses the reaction alpha-D-glucose 1-phosphate + ATP + H(+) = ADP-alpha-D-glucose + diphosphate. The protein operates within glycan biosynthesis; glycogen biosynthesis. Its function is as follows. Involved in the biosynthesis of ADP-glucose, a building block required for the elongation reactions to produce glycogen. Catalyzes the reaction between ATP and alpha-D-glucose 1-phosphate (G1P) to produce pyrophosphate and ADP-Glc. This Aliivibrio fischeri (strain ATCC 700601 / ES114) (Vibrio fischeri) protein is Glucose-1-phosphate adenylyltransferase.